We begin with the raw amino-acid sequence, 418 residues long: Serine--tRNA ligase (418 aa).

An L-serine-binding site is contributed by 231 to 233; the sequence is TAE. 262-264 is a binding site for ATP; the sequence is RSE. Position 285 (E285) interacts with L-serine. 349–352 serves as a coordination point for ATP; it reads EISS. S385 serves as a coordination point for L-serine.

The protein belongs to the class-II aminoacyl-tRNA synthetase family. Type-1 seryl-tRNA synthetase subfamily. In terms of assembly, homodimer. The tRNA molecule binds across the dimer.

Its subcellular location is the cytoplasm. The enzyme catalyses tRNA(Ser) + L-serine + ATP = L-seryl-tRNA(Ser) + AMP + diphosphate + H(+). The catalysed reaction is tRNA(Sec) + L-serine + ATP = L-seryl-tRNA(Sec) + AMP + diphosphate + H(+). It participates in aminoacyl-tRNA biosynthesis; selenocysteinyl-tRNA(Sec) biosynthesis; L-seryl-tRNA(Sec) from L-serine and tRNA(Sec): step 1/1. Its function is as follows. Catalyzes the attachment of serine to tRNA(Ser). Is also able to aminoacylate tRNA(Sec) with serine, to form the misacylated tRNA L-seryl-tRNA(Sec), which will be further converted into selenocysteinyl-tRNA(Sec). In Ureaplasma parvum serovar 3 (strain ATCC 27815 / 27 / NCTC 11736), this protein is Serine--tRNA ligase.